The sequence spans 390 residues: MISLPGPLVTNLLRFLFLGLSALAPPSRAELQLHLPANQLQAVEGGEVVLPAWYTLHAEVSSAQPGEVPFVMWFFKDKEKEDQVLSYINGVTTSKPGVSLVYSMPSRNLSLRLEGLQEKDSGPYSCSVNVQDKNGQASGHSIKTLELNVLVPPAPPSCRLQGVPRVGANVTLSCQSPRSKPAVQYQWDRQLPSFQTFFAPVLDVIRGSLSLTNLSSSMAGVYVCKAHNEVGTAQCNVTLEVSTGPGAAVVAGAVVGTLVGLGLLAGLVLLYHRRGKALEEPANDIKEDAIAPRTLPWPKSSDTISKNGTLSSVTSARALRPPHGPPRPGALTPTPSLSSQALPSPRLPTTDGANPQPISLIPGGVSSSGLSRMGAVPVMVPAQSQAGSLV.

The N-terminal stretch at 1–29 (MISLPGPLVTNLLRFLFLGLSALAPPSRA) is a signal peptide. Residues 30 to 143 (ELQLHLPANQ…NGQASGHSIK (114 aa)) form the Ig-like V-type domain. Topologically, residues 30 to 248 (ELQLHLPANQ…LEVSTGPGAA (219 aa)) are extracellular. Residues asparagine 108, asparagine 169, asparagine 213, and asparagine 236 are each glycosylated (N-linked (GlcNAc...) asparagine). One can recognise an Ig-like C2-type domain in the interval 156-242 (PSCRLQGVPR…AQCNVTLEVS (87 aa)). Cysteines 174 and 224 form a disulfide. The helical transmembrane segment at 249–269 (VVAGAVVGTLVGLGLLAGLVL) threads the bilayer. Residues 270 to 390 (LYHRRGKALE…PAQSQAGSLV (121 aa)) are Cytoplasmic-facing. Serine 301 is subject to Phosphoserine. The disordered stretch occupies residues 316-365 (ARALRPPHGPPRPGALTPTPSLSSQALPSPRLPTTDGANPQPISLIPGGV). 2 positions are modified to phosphothreonine: threonine 332 and threonine 334. Polar residues predominate over residues 333-342 (PTPSLSSQAL). Serine 336, serine 339, serine 344, and serine 371 each carry phosphoserine.

As to quaternary structure, interacts with MAGI1.

Its subcellular location is the cell junction. It localises to the adherens junction. The protein resides in the tight junction. It is found in the cell membrane. Its function is as follows. Can mediate aggregation most likely through a homophilic molecular interaction. This chain is Endothelial cell-selective adhesion molecule (ESAM), found in Macaca fascicularis (Crab-eating macaque).